The following is a 351-amino-acid chain: Peptide chain release factor 1 (351 aa).

The residue at position 230 (glutamine 230) is an N5-methylglutamine.

This sequence belongs to the prokaryotic/mitochondrial release factor family. Methylated by PrmC. Methylation increases the termination efficiency of RF1.

The protein localises to the cytoplasm. Peptide chain release factor 1 directs the termination of translation in response to the peptide chain termination codons UAG and UAA. The sequence is that of Peptide chain release factor 1 from Onion yellows phytoplasma (strain OY-M).